The primary structure comprises 387 residues: ATP phosphoribosyltransferase regulatory subunit (387 aa).

The protein belongs to the class-II aminoacyl-tRNA synthetase family. HisZ subfamily. As to quaternary structure, heteromultimer composed of HisG and HisZ subunits.

It is found in the cytoplasm. Its pathway is amino-acid biosynthesis; L-histidine biosynthesis; L-histidine from 5-phospho-alpha-D-ribose 1-diphosphate: step 1/9. Required for the first step of histidine biosynthesis. May allow the feedback regulation of ATP phosphoribosyltransferase activity by histidine. The sequence is that of ATP phosphoribosyltransferase regulatory subunit from Polynucleobacter asymbioticus (strain DSM 18221 / CIP 109841 / QLW-P1DMWA-1) (Polynucleobacter necessarius subsp. asymbioticus).